Reading from the N-terminus, the 206-residue chain is GTP cyclohydrolase 1 (206 aa).

Positions 1–17 are enriched in basic and acidic residues; sequence MDAVTPKKDIPRPDSVR. The segment at 1–23 is disordered; it reads MDAVTPKKDIPRPDSVRRPSQQE. Zn(2+) is bound by residues C95, H98, and C166.

Belongs to the GTP cyclohydrolase I family. Toroid-shaped homodecamer, composed of two pentamers of five dimers.

The enzyme catalyses GTP + H2O = 7,8-dihydroneopterin 3'-triphosphate + formate + H(+). The protein operates within cofactor biosynthesis; 7,8-dihydroneopterin triphosphate biosynthesis; 7,8-dihydroneopterin triphosphate from GTP: step 1/1. This is GTP cyclohydrolase 1 from Hyphomonas neptunium (strain ATCC 15444).